Reading from the N-terminus, the 208-residue chain is Anti-sigma-W factor RsiW (208 aa).

The Cytoplasmic portion of the chain corresponds to 1–87; sequence MSCPEQIVQL…ASVKRWFRTH (87 aa). Zn(2+)-binding residues include C3, H30, C34, and C37. Residues 88-108 traverse the membrane as a helical segment; it reads PVIAAAAVFIILMGGGFFNSW. Over 109 to 208 the chain is Extracellular; it reads HNDHNFSVSK…LDAFNPNGEE (100 aa).

It belongs to the zinc-associated anti-sigma factor (ZAS) superfamily. Anti-sigma-W factor family. In terms of assembly, forms a heterodimer with cognate sigma factor SigW, which probably prevents SigW from binding to DNA. The cofactor is Zn(2+). Post-translationally, is processed by successive proteolytic events. First, the extracellular region of RsiW is cleaved by PrsW (site-1 cleavage) in response to cell envelope stresses. In a reconstituted E.coli system PrsW cuts between Ala-168 and Ser-169 followed by trimming by E.coli Tsp; the endogenous extracellular exopeptidase responsible for the event in B.subtilis has not been identified. Next, it undergoes cleavage at an intramembrane site (site-2 cleavage) mediated by RasP. This cleavage uncovers a cryptic proteolytic tag with conserved alanine residues in the transmembrane segment, that is recognized mainly by the ClpXP protease, which completely degrades the protein in the cytoplasm and leads to the induction of the sigma-W-controlled genes.

Its subcellular location is the cell membrane. Functionally, the anti-sigma factor for extracytoplasmic function (ECF) sigma factor sigma-W (SigW). Holds SigW, its cognate ECF sigma factor, in an inactive form until released by regulated intramembrane proteolysis (RIP). SigW and RsiW mediate cell response to cell wall stress. RIP occurs when an extracytoplasmic signal triggers a concerted proteolytic cascade to transmit information and elicit cellular responses. The membrane-spanning regulatory substrate protein is first cut periplasmically (site-1 protease, S1P, PrsW), then within the membrane itself (site-2 protease, S2P, RasP), while cytoplasmic proteases finish degrading the anti-sigma factor, liberating sigma-W. The polypeptide is Anti-sigma-W factor RsiW (rsiW) (Bacillus subtilis (strain 168)).